A 148-amino-acid polypeptide reads, in one-letter code: Lysozyme C (148 aa).

Positions 1-18 are cleaved as a signal peptide; the sequence is MKAVIILGLVLLSVTVQG. Positions 19 to 148 constitute a C-type lysozyme domain; sequence KIFERCELAR…VSQYVQGCGV (130 aa). 4 disulfide bridges follow: cysteine 24–cysteine 146, cysteine 48–cysteine 134, cysteine 83–cysteine 99, and cysteine 95–cysteine 113. Catalysis depends on residues glutamate 53 and aspartate 71.

It belongs to the glycosyl hydrolase 22 family. As to quaternary structure, monomer.

It localises to the secreted. It carries out the reaction Hydrolysis of (1-&gt;4)-beta-linkages between N-acetylmuramic acid and N-acetyl-D-glucosamine residues in a peptidoglycan and between N-acetyl-D-glucosamine residues in chitodextrins.. Lysozymes have primarily a bacteriolytic function; those in tissues and body fluids are associated with the monocyte-macrophage system and enhance the activity of immunoagents. This chain is Lysozyme C (LYZ), found in Macaca mulatta (Rhesus macaque).